The chain runs to 225 residues: Biosynthetic peptidoglycan transglycosylase (225 aa).

Residues Leu9 to Trp29 form a helical membrane-spanning segment.

This sequence belongs to the glycosyltransferase 51 family.

The protein localises to the cell inner membrane. The catalysed reaction is [GlcNAc-(1-&gt;4)-Mur2Ac(oyl-L-Ala-gamma-D-Glu-L-Lys-D-Ala-D-Ala)](n)-di-trans,octa-cis-undecaprenyl diphosphate + beta-D-GlcNAc-(1-&gt;4)-Mur2Ac(oyl-L-Ala-gamma-D-Glu-L-Lys-D-Ala-D-Ala)-di-trans,octa-cis-undecaprenyl diphosphate = [GlcNAc-(1-&gt;4)-Mur2Ac(oyl-L-Ala-gamma-D-Glu-L-Lys-D-Ala-D-Ala)](n+1)-di-trans,octa-cis-undecaprenyl diphosphate + di-trans,octa-cis-undecaprenyl diphosphate + H(+). Its pathway is cell wall biogenesis; peptidoglycan biosynthesis. Its function is as follows. Peptidoglycan polymerase that catalyzes glycan chain elongation from lipid-linked precursors. The protein is Biosynthetic peptidoglycan transglycosylase of Acinetobacter baumannii (strain SDF).